We begin with the raw amino-acid sequence, 294 residues long: Lipoyl synthase (294 aa).

The [4Fe-4S] cluster site is built by cysteine 35, cysteine 40, cysteine 46, cysteine 61, cysteine 65, cysteine 68, and serine 275. The 219-residue stretch at 46–264 folds into the Radical SAM core domain; it reads CWGGGTATVM…REAGLGLGFR (219 aa).

It belongs to the radical SAM superfamily. Lipoyl synthase family. It depends on [4Fe-4S] cluster as a cofactor.

Its subcellular location is the cytoplasm. It carries out the reaction [[Fe-S] cluster scaffold protein carrying a second [4Fe-4S](2+) cluster] + N(6)-octanoyl-L-lysyl-[protein] + 2 oxidized [2Fe-2S]-[ferredoxin] + 2 S-adenosyl-L-methionine + 4 H(+) = [[Fe-S] cluster scaffold protein] + N(6)-[(R)-dihydrolipoyl]-L-lysyl-[protein] + 4 Fe(3+) + 2 hydrogen sulfide + 2 5'-deoxyadenosine + 2 L-methionine + 2 reduced [2Fe-2S]-[ferredoxin]. It functions in the pathway protein modification; protein lipoylation via endogenous pathway; protein N(6)-(lipoyl)lysine from octanoyl-[acyl-carrier-protein]: step 2/2. Its function is as follows. Catalyzes the radical-mediated insertion of two sulfur atoms into the C-6 and C-8 positions of the octanoyl moiety bound to the lipoyl domains of lipoate-dependent enzymes, thereby converting the octanoylated domains into lipoylated derivatives. The sequence is that of Lipoyl synthase from Anaeromyxobacter sp. (strain Fw109-5).